Here is a 389-residue protein sequence, read N- to C-terminus: Glutaryl-CoA dehydrogenase (389 aa).

Residues Arg87 and Asn91 each contribute to the substrate site. Residues 126–129, Ser135, and 159–161 contribute to the FAD site; these read FGIT and WIS. Ser135 serves as a coordination point for substrate. Residue Ser181 coordinates substrate. FAD-binding positions include Arg271, 281–284, Arg340, Ala344, and 367–371; these read FQMN and EGSAN. Glu367 (proton acceptor) is an active-site residue. Arg385 is a binding site for substrate.

This sequence belongs to the acyl-CoA dehydrogenase family. As to quaternary structure, homotetramer. FAD serves as cofactor.

It catalyses the reaction glutaryl-CoA + A = (2E)-glutaconyl-CoA + AH2. It participates in aromatic compound metabolism; benzoyl-CoA degradation. With respect to regulation, inhibited by glutaconyl-CoA. Catalyzes the dehydrogenation of Glutaryl-CoA to glutaconyl-CoA. The chain is Glutaryl-CoA dehydrogenase (Acd) from Desulfococcus multivorans.